A 303-amino-acid polypeptide reads, in one-letter code: Ribosomal RNA small subunit methyltransferase H (303 aa).

S-adenosyl-L-methionine is bound by residues cysteine 36–histidine 38, aspartate 55, phenylalanine 81, aspartate 101, and glutamine 108.

The protein belongs to the methyltransferase superfamily. RsmH family.

It localises to the cytoplasm. The enzyme catalyses cytidine(1402) in 16S rRNA + S-adenosyl-L-methionine = N(4)-methylcytidine(1402) in 16S rRNA + S-adenosyl-L-homocysteine + H(+). Its function is as follows. Specifically methylates the N4 position of cytidine in position 1402 (C1402) of 16S rRNA. The sequence is that of Ribosomal RNA small subunit methyltransferase H from Aster yellows witches'-broom phytoplasma (strain AYWB).